The chain runs to 176 residues: Macro domain-containing protein LMOf2365_2748 (176 aa).

The Macro domain occupies 1–175 (MEITVVKGDI…LYNKLINSEV (175 aa)).

Belongs to the MacroD-type family.

In Listeria monocytogenes serotype 4b (strain F2365), this protein is Macro domain-containing protein LMOf2365_2748.